The primary structure comprises 185 residues: NEDD8-conjugating enzyme UBE2F (185 aa).

The segment at 1-29 (MLTLASKLKRDDGVKGSRTSSTTSDSTRR) is disordered. The segment at 1–29 (MLTLASKLKRDDGVKGSRTSSTTSDSTRR) is interaction with uba3. The UBC core domain maps to 32–185 (VRDRLLVKEV…VEDYIKRYAR (154 aa)). C116 acts as the Glycyl thioester intermediate in catalysis.

It belongs to the ubiquitin-conjugating enzyme family. UBE2F subfamily.

The enzyme catalyses [E1 NEDD8-activating enzyme]-S-[NEDD8 protein]-yl-L-cysteine + [E2 NEDD8-conjugating enzyme]-L-cysteine = [E1 NEDD8-activating enzyme]-L-cysteine + [E2 NEDD8-conjugating enzyme]-S-[NEDD8-protein]-yl-L-cysteine.. It functions in the pathway protein modification; protein neddylation. Its function is as follows. Accepts the ubiquitin-like protein NEDD8 from the UBA3-NAE1 E1 complex and catalyzes its covalent attachment to other proteins. Together with the E3 ubiquitin ligase rnf7/rbx2, specifically neddylates cullin-5 (cul5). Does not neddylate cul1, cul2, cul3, cul4a or cul4b. In Xenopus tropicalis (Western clawed frog), this protein is NEDD8-conjugating enzyme UBE2F (ube2f).